A 107-amino-acid polypeptide reads, in one-letter code: Acidic phospholipase A2 braziliase-I (107 aa).

7 cysteine pairs are disulfide-bonded: C26–C100, C28–C44, C43–C86, C49–C107, C50–C79, C57–C72, and C66–C77. Ca(2+)-binding residues include Y27, G29, and G31. The active site involves H47. A Ca(2+)-binding site is contributed by D48. The active site involves D80.

In terms of assembly, monomer. Ca(2+) is required as a cofactor. Expressed by the venom gland.

It localises to the secreted. It carries out the reaction a 1,2-diacyl-sn-glycero-3-phosphocholine + H2O = a 1-acyl-sn-glycero-3-phosphocholine + a fatty acid + H(+). Snake venom phospholipase A2 (PLA2) that induces significant edematogenic activity. Shows mild cytotoxicity on Trypanosoma cruzi and Leishmania infantum. Also inhibits ADP- and collagen-induced platelet aggregation. Does not show myotoxic activity. This is Acidic phospholipase A2 braziliase-I from Bothrops brazili (Brazil's lancehead).